The chain runs to 89 residues: Small ribosomal subunit protein uS17 (89 aa).

The protein belongs to the universal ribosomal protein uS17 family. In terms of assembly, part of the 30S ribosomal subunit.

In terms of biological role, one of the primary rRNA binding proteins, it binds specifically to the 5'-end of 16S ribosomal RNA. The polypeptide is Small ribosomal subunit protein uS17 (Polynucleobacter asymbioticus (strain DSM 18221 / CIP 109841 / QLW-P1DMWA-1) (Polynucleobacter necessarius subsp. asymbioticus)).